We begin with the raw amino-acid sequence, 250 residues long: Non-specific acid phosphatase (250 aa).

The N-terminal stretch at 1-20 (MKSRYLLFFLPLIVAKYTSA) is a signal peptide.

This sequence belongs to the class A bacterial acid phosphatase family. Homodimer.

The protein resides in the periplasm. The enzyme catalyses a phosphate monoester + H2O = an alcohol + phosphate. The protein is Non-specific acid phosphatase (phoN) of Salmonella typhi.